Reading from the N-terminus, the 427-residue chain is Glutamate-1-semialdehyde 2,1-aminomutase (427 aa).

K268 carries the post-translational modification N6-(pyridoxal phosphate)lysine.

Belongs to the class-III pyridoxal-phosphate-dependent aminotransferase family. HemL subfamily. Requires pyridoxal 5'-phosphate as cofactor.

The protein resides in the cytoplasm. The enzyme catalyses (S)-4-amino-5-oxopentanoate = 5-aminolevulinate. Its pathway is porphyrin-containing compound metabolism; protoporphyrin-IX biosynthesis; 5-aminolevulinate from L-glutamyl-tRNA(Glu): step 2/2. The protein is Glutamate-1-semialdehyde 2,1-aminomutase of Methanococcus maripaludis (strain C6 / ATCC BAA-1332).